A 289-amino-acid chain; its full sequence is 4-diphosphocytidyl-2-C-methyl-D-erythritol kinase (289 aa).

Residue Lys-15 is part of the active site. 100–110 contributes to the ATP binding site; the sequence is PVSAGLAGGSA. Asp-140 is an active-site residue.

The protein belongs to the GHMP kinase family. IspE subfamily.

It carries out the reaction 4-CDP-2-C-methyl-D-erythritol + ATP = 4-CDP-2-C-methyl-D-erythritol 2-phosphate + ADP + H(+). Its pathway is isoprenoid biosynthesis; isopentenyl diphosphate biosynthesis via DXP pathway; isopentenyl diphosphate from 1-deoxy-D-xylulose 5-phosphate: step 3/6. Its function is as follows. Catalyzes the phosphorylation of the position 2 hydroxy group of 4-diphosphocytidyl-2C-methyl-D-erythritol. The chain is 4-diphosphocytidyl-2-C-methyl-D-erythritol kinase from Anaplasma marginale (strain Florida).